The chain runs to 480 residues: Chromosomal replication initiator protein DnaA (480 aa).

Positions 1–73 are domain I, interacts with DnaA modulators; the sequence is MNQDFWPFCL…GELGEEFHGQ (73 aa). The interval 73–143 is domain II; it reads QPIQLELQLP…SANELAYDKT (71 aa). Positions 144–360 are domain III, AAA+ region; the sequence is RLNADFTFDT…GALNKVVAYA (217 aa). ATP is bound by residues Gly-188, Gly-190, Lys-191, and Thr-192. The tract at residues 361–480 is domain IV, binds dsDNA; sequence RFHGRGISLE…VHVLTQVLRG (120 aa).

This sequence belongs to the DnaA family. In terms of assembly, oligomerizes as a right-handed, spiral filament on DNA at oriC.

It localises to the cytoplasm. Functionally, plays an essential role in the initiation and regulation of chromosomal replication. ATP-DnaA binds to the origin of replication (oriC) to initiate formation of the DNA replication initiation complex once per cell cycle. Binds the DnaA box (a 9 base pair repeat at the origin) and separates the double-stranded (ds)DNA. Forms a right-handed helical filament on oriC DNA; dsDNA binds to the exterior of the filament while single-stranded (ss)DNA is stabiized in the filament's interior. The ATP-DnaA-oriC complex binds and stabilizes one strand of the AT-rich DNA unwinding element (DUE), permitting loading of DNA polymerase. After initiation quickly degrades to an ADP-DnaA complex that is not apt for DNA replication. Binds acidic phospholipids. This chain is Chromosomal replication initiator protein DnaA, found in Azoarcus sp. (strain BH72).